We begin with the raw amino-acid sequence, 224 residues long: uncharacterized protein (224 aa).

The next 6 membrane-spanning stretches (helical) occupy residues 25 to 45 (MMLALAIITSLISEFISIPFF), 54 to 74 (ISVVFLVACAFFVSLGWSLTI), 91 to 111 (IGVLTVTLANLSTILFTRLYF), 119 to 139 (FCWIFVFLFTTLSNALLLTTL), 142 to 162 (ILITPLFWYYFGYVQTPNFLI), and 174 to 194 (HFFFFGINNYWLGIFCLYSFF).

It localises to the cell membrane. This is an uncharacterized protein from Mycoplasma genitalium (strain ATCC 33530 / DSM 19775 / NCTC 10195 / G37) (Mycoplasmoides genitalium).